We begin with the raw amino-acid sequence, 266 residues long: Nuclease (266 aa).

The first 21 residues, Met-1 to Ala-21, serve as a signal peptide directing secretion. A disulfide bond links Cys-30 and Cys-34. His-110 acts as the Proton acceptor in catalysis. Asn-140 is a binding site for Mg(2+). Cys-222 and Cys-264 form a disulfide bridge.

It belongs to the DNA/RNA non-specific endonuclease family. In terms of assembly, homodimer. Mg(2+) serves as cofactor.

The protein localises to the secreted. It carries out the reaction Endonucleolytic cleavage to 5'-phosphomononucleotide and 5'-phosphooligonucleotide end-products.. Its function is as follows. Catalyzes the hydrolysis of both DNA and RNA, double- or single-stranded, at the 3'position of the phosphodiester bond to produce 5'-phosphorylated mono-, di-, tri- and tetranucleotides. DNA is a slightly better substrate than RNA. The polypeptide is Nuclease (nucA) (Serratia marcescens).